Reading from the N-terminus, the 287-residue chain is Anthocyanidin 3-O-glucosyltransferase 7 (287 aa).

7 residues coordinate UDP-alpha-D-glucose: Ala-162, Gln-164, His-179, Trp-182, Asn-183, Ser-184, and Glu-187. Gly-202 is an an anthocyanidin binding site. Asp-203 and Gln-204 together coordinate UDP-alpha-D-glucose.

This sequence belongs to the UDP-glycosyltransferase family. Expressed in cotyledons, hypocotyls, roots and leaves.

The enzyme catalyses an anthocyanidin + UDP-alpha-D-glucose + H(+) = an anthocyanidin 3-O-beta-D-glucoside + UDP. It participates in pigment biosynthesis; anthocyanin biosynthesis. In the presence of other necessary color factors, this glycosylation reaction allows the accumulation of anthocyanin pigments. This Manihot esculenta (Cassava) protein is Anthocyanidin 3-O-glucosyltransferase 7 (GT7).